Reading from the N-terminus, the 65-residue chain is Large ribosomal subunit protein bL35 (65 aa).

The disordered stretch occupies residues 1 to 28 (MPKLKTRKAAARRFKATGSGKIKRRKAF).

Belongs to the bacterial ribosomal protein bL35 family.

The chain is Large ribosomal subunit protein bL35 from Trichodesmium erythraeum (strain IMS101).